Here is a 434-residue protein sequence, read N- to C-terminus: Putative ankyrin repeat protein FPV023 (434 aa).

ANK repeat units follow at residues 33 to 62 (RLKI…DPVA), 134 to 163 (LTIS…DINF), 167 to 197 (IGNT…DINI), 201 to 230 (YGTT…DPNS), 236 to 265 (IGTK…DPNI), 269 to 299 (AGVT…DPNI), and 303 to 330 (NGTT…DINI).

In Fowlpox virus (strain NVSL) (FPV), this protein is Putative ankyrin repeat protein FPV023.